Reading from the N-terminus, the 159-residue chain is uncharacterized protein (159 aa).

Transmembrane regions (helical) follow at residues 10 to 30 (FLSMFFMAILFFPAFNASLFF), 52 to 72 (MLILCFGFMSFSFLNIHVILL), and 96 to 116 (LTLIFLLIAIVIAPLIAPFVT).

It is found in the membrane. This is an uncharacterized protein from Escherichia coli (strain K12).